The following is a 747-amino-acid chain: H(+)/Cl(-) exchange transporter 4 (747 aa).

The interval 1–50 (MDFLDEPFPDVGTYEDFHTIDWLREKSRDTDRHRKITSKSKESIWEFIKS) is required for localization in the endoplasmic reticulum. The Cytoplasmic portion of the chain corresponds to 1–54 (MDFLDEPFPDVGTYEDFHTIDWLREKSRDTDRHRKITSKSKESIWEFIKSLLDA). The next 2 membrane-spanning stretches (helical) occupy residues 55-92 (WSGW…VCLS) and 138-161 (LNYL…VRVF). Positions 167–171 (GSGIP) match the Selectivity filter part_1 motif. Ser168 serves as a coordination point for chloride. Residues 170–177 (IPEIKTIL) constitute an intramembrane region (helical). A run of 2 helical transmembrane segments spans residues 187 to 205 (GKWT…VSSG) and 211 to 230 (EGPL…SLFS). Residues 209-213 (GKEGP) carry the Selectivity filter part_2 motif. 2 intramembrane regions (helical) span residues 242 to 254 (VLSA…VSVA) and 258 to 266 (PIGGVLFSL). A run of 5 helical transmembrane segments spans residues 278-296 (LWRS…RSIN), 320-345 (FPFI…AWCR), 352-372 (LGKY…IIAY), 429-449 (MWQL…TFGM), and 454-473 (GLFI…VGIG). The short motif at 454–458 (GLFIP) is the Selectivity filter part_3 element. Phe456 provides a ligand contact to chloride. 2 intramembrane regions (helical) span residues 501 to 515 (GLYA…LGGV) and 519 to 530 (TVSLVVIMFELT). Positions 531-534 (GGLE) form an intramembrane region, note=Loop between two helices. The helical transmembrane segment at 535–553 (YIVPLMAAAVTSKWVADAF) threads the bilayer. At 554-747 (GKEGIYEAHI…NQDPESIIFN (194 aa)) the chain is on the cytoplasmic side. Tyr559 serves as a coordination point for chloride. In terms of domain architecture, CBS 1 spans 587 to 653 (MRPRRGEPPL…AIKNARQRQE (67 aa)). ATP contacts are provided by residues Ser597 and 618 to 620 (YNG). The interval 654 to 683 (GIVSNSIMYFTEEPPELPANSPHPLKLRRI) is required for localization in the endoplasmic reticulum. The CBS 2 domain maps to 684–742 (LNLSPFTVTDHTPMETVVDIFRKLGLRQCLVTRSGRLLGIITKKDVLRHMAQMANQDPE). 725–728 (TKKD) is an ATP binding site.

The protein belongs to the chloride channel (TC 2.A.49) family. ClC-4/CLCN4 subfamily. Strongly expressed in liver and brain, but also in heart, muscle, kidney and spleen.

Its subcellular location is the early endosome membrane. The protein resides in the late endosome membrane. The protein localises to the endoplasmic reticulum membrane. It localises to the lysosome membrane. It is found in the recycling endosome membrane. Its function is as follows. Strongly outwardly rectifying, electrogenic H(+)/Cl(-)exchanger which mediates the exchange of chloride ions against protons. The CLC channel family contains both chloride channels and proton-coupled anion transporters that exchange chloride or another anion for protons. The presence of conserved gating glutamate residues is typical for family members that function as antiporters. This is H(+)/Cl(-) exchange transporter 4 (Clcn4) from Rattus norvegicus (Rat).